The sequence spans 312 residues: CD-NTase-associated protein 12 (312 aa).

Residues 5 to 127 (RLFIGSSSEE…FNGLTLARFD (123 aa)) enclose the TIR domain.

In the C-terminal section; belongs to the bacterial STING family. Forms homodimers; in the presence of c-di-GMP forms filaments with an ordered array of parallel-stacked subunits.

The catalysed reaction is NAD(+) + H2O = ADP-D-ribose + nicotinamide + H(+). With respect to regulation, NAD(+) hydrolase activity is strongly stimulated by c-di-GMP, weakly by 3'3'-cGAMP, very weakly by c-di-AMP but not at all by 2'3'-cGAMP. Self-association of TIR domains is required for NADase activity. In terms of biological role, effector protein of a CBASS antiviral system with NAD(+) hydrolase activity. CBASS (cyclic oligonucleotide-based antiphage signaling system) provides immunity against bacteriophage. The CD-NTase protein synthesizes cyclic nucleotides in response to infection; these serve as specific second messenger signals. The signals activate a diverse range of effectors, leading to bacterial cell death and thus abortive phage infection. A type I-D CBASS(GG) system. Its function is as follows. Binds c-di-GMP, does not bind cUMP-AMP. Upon activation by c-di-GMP forms filaments which hydrolyze NAD(+); filament formation is required for enzyme activation. The sequence is that of CD-NTase-associated protein 12 from Niabella drilacis (strain DSM 25811 / CCM 8410 / CCUG 62505 / LMG 26954 / E90).